A 202-amino-acid polypeptide reads, in one-letter code: Hydrogenase expression/formation protein HupD (202 aa).

Positions 28, 74, and 105 each coordinate Ni(2+).

This sequence belongs to the peptidase A31 family.

In terms of biological role, not known. Could be involved in the processing of hydrogenase. This is Hydrogenase expression/formation protein HupD (hupD) from Rhizobium leguminosarum bv. viciae.